Reading from the N-terminus, the 428-residue chain is Chaperone SurA (428 aa).

The signal sequence occupies residues 1–13; that stretch reads MLGALLLSGAVHA. 2 consecutive PpiC domains span residues 164-265 and 276-375; these read SEEF…KLLE and RDEV…EVLG.

The protein resides in the periplasm. It carries out the reaction [protein]-peptidylproline (omega=180) = [protein]-peptidylproline (omega=0). In terms of biological role, chaperone involved in the correct folding and assembly of outer membrane proteins. Recognizes specific patterns of aromatic residues and the orientation of their side chains, which are found more frequently in integral outer membrane proteins. May act in both early periplasmic and late outer membrane-associated steps of protein maturation. This Pseudomonas syringae pv. tomato (strain ATCC BAA-871 / DC3000) protein is Chaperone SurA.